We begin with the raw amino-acid sequence, 403 residues long: Phosphomevalonate dehydratase large subunit (403 aa).

Positions 48, 49, 50, 79, and 80 each coordinate (R)-5-phosphomevalonate. Residue Cys119 participates in [4Fe-4S] cluster binding. The (R)-5-phosphomevalonate site is built by Glu138 and Ser139. The [4Fe-4S] cluster site is built by Cys301 and Cys358. Residue Lys378 participates in (R)-5-phosphomevalonate binding.

The protein belongs to the AcnX type II large subunit family. As to quaternary structure, heterodimer composed of a large subunit (PMDh-L) and a small subunit (PMDh-S). [4Fe-4S] cluster serves as cofactor.

It catalyses the reaction (R)-5-phosphomevalonate = (2E)-3-methyl-5-phosphooxypent-2-enoate + H2O. The protein operates within isoprenoid biosynthesis; isopentenyl diphosphate biosynthesis via mevalonate pathway. In terms of biological role, component of a hydro-lyase that catalyzes the dehydration of mevalonate 5-phosphate (MVA5P) to form trans-anhydromevalonate 5-phosphate (tAHMP). Involved in the archaeal mevalonate (MVA) pathway, which provides fundamental precursors for isoprenoid biosynthesis, such as isopentenyl diphosphate (IPP) and dimethylallyl diphosphate (DMAPP). The chain is Phosphomevalonate dehydratase large subunit from Methanocaldococcus jannaschii (strain ATCC 43067 / DSM 2661 / JAL-1 / JCM 10045 / NBRC 100440) (Methanococcus jannaschii).